We begin with the raw amino-acid sequence, 228 residues long: MKISILSLFPELYETWIKHSIISNAIKNNQVIIEVIDFRLYTNDKHKKVDDYQYGGGAGMVLRIEPIVAAIRAIRSSNSYVILTTPKGQVFNQELANNFVSKYDHIIIIAGHYEGFDERINYYIDAQYSIGDFVLTGGELPSMVISDAVIRLLDGVISPSSLETESFNNYLLDYPVYTRPLVFEGHKVPDILLSGHHKNIADFRKQQQETITKKNRPDLYQKYLNNKK.

S-adenosyl-L-methionine is bound by residues Gly-111 and Ile-130–Leu-135.

The protein belongs to the RNA methyltransferase TrmD family. In terms of assembly, homodimer.

The protein resides in the cytoplasm. It catalyses the reaction guanosine(37) in tRNA + S-adenosyl-L-methionine = N(1)-methylguanosine(37) in tRNA + S-adenosyl-L-homocysteine + H(+). In terms of biological role, specifically methylates guanosine-37 in various tRNAs. The protein is tRNA (guanine-N(1)-)-methyltransferase of Ureaplasma parvum serovar 3 (strain ATCC 27815 / 27 / NCTC 11736).